A 554-amino-acid polypeptide reads, in one-letter code: Propanediol dehydratase large subunit (554 aa).

This sequence belongs to the diol/glycerol dehydratase large subunit family. In terms of assembly, the propanediol dehydratase enzyme is a heterotrimeric complex composed of a large (PduC), a medium (PduD) and a small (PduE) subunit. Adenosylcob(III)alamin is required as a cofactor.

It is found in the bacterial microcompartment. It carries out the reaction propane-1,2-diol = propanal + H2O. It participates in polyol metabolism; 1,2-propanediol degradation. Part of the PduCDE complex that catalyzes the dehydration of 1,2-propanediol (1,2-PD) to propionaldehyde. This subunit is directly targeted to the bacterial microcompartment (BMC). Its function is as follows. Expression of a cosmid containing the full 21-gene pdu operon in E.coli allows E.coli to grow on 1,2-propanediol (1,2-PD) with the appearance of BMCs in its cytoplasm. In terms of biological role, the 1,2-PD-specific bacterial microcompartment (BMC) concentrates low levels of 1,2-PD catabolic enzymes, concentrates volatile reaction intermediates thus enhancing pathway flux and keeps the level of toxic, mutagenic propionaldehyde low. This Citrobacter freundii protein is Propanediol dehydratase large subunit.